Reading from the N-terminus, the 367-residue chain is NADH-ubiquinone oxidoreductase chain 1 (367 aa).

Helical transmembrane passes span 5–25, 43–63, 74–94, 108–128, 152–172, 179–199, 225–245, 265–285, 301–321, and 336–356; these read IIIS…GIAY, PNFV…KLLL, IILF…GYAV, LGIY…LLAG, LVLS…NLSV, AIWN…GSVA, AVVF…MCIL, FFYS…NIFY, LIYG…FIWV, and FCWT…PCIL.

The protein belongs to the complex I subunit 1 family.

It localises to the mitochondrion inner membrane. It carries out the reaction a ubiquinone + NADH + 5 H(+)(in) = a ubiquinol + NAD(+) + 4 H(+)(out). Core subunit of the mitochondrial membrane respiratory chain NADH dehydrogenase (Complex I) that is believed to belong to the minimal assembly required for catalysis. Complex I functions in the transfer of electrons from NADH to the respiratory chain. The immediate electron acceptor for the enzyme is believed to be ubiquinone. In Podospora anserina (strain S / ATCC MYA-4624 / DSM 980 / FGSC 10383) (Pleurage anserina), this protein is NADH-ubiquinone oxidoreductase chain 1 (ND1).